The chain runs to 229 residues: Prolactin (229 aa).

An N-terminal signal peptide occupies residues 1-30 (MDSKVSSQKGSRLLLLLVVSNLLLCQGVVS). A disulfide bond links cysteine 34 and cysteine 41. Phosphoserine occurs at positions 56, 64, and 120. 2 disulfides stabilise this stretch: cysteine 88–cysteine 204 and cysteine 221–cysteine 229.

Belongs to the somatotropin/prolactin family. Interacts with PRLR.

The protein resides in the secreted. Prolactin acts primarily on the mammary gland by promoting lactation. This is Prolactin (PRL) from Cervus elaphus (Red deer).